The following is a 270-amino-acid chain: Formamidopyrimidine-DNA glycosylase (270 aa).

The Schiff-base intermediate with DNA role is filled by proline 2. Glutamate 3 (proton donor) is an active-site residue. The active-site Proton donor; for beta-elimination activity is the lysine 56. DNA contacts are provided by histidine 89, arginine 107, and arginine 151. The FPG-type zinc finger occupies 236–270; the sequence is TVYGRAGEPCRVCATPIRLLRQGQRSTYYCPNCQK. Catalysis depends on arginine 260, which acts as the Proton donor; for delta-elimination activity.

Belongs to the FPG family. In terms of assembly, monomer. Zn(2+) serves as cofactor.

The catalysed reaction is Hydrolysis of DNA containing ring-opened 7-methylguanine residues, releasing 2,6-diamino-4-hydroxy-5-(N-methyl)formamidopyrimidine.. It carries out the reaction 2'-deoxyribonucleotide-(2'-deoxyribose 5'-phosphate)-2'-deoxyribonucleotide-DNA = a 3'-end 2'-deoxyribonucleotide-(2,3-dehydro-2,3-deoxyribose 5'-phosphate)-DNA + a 5'-end 5'-phospho-2'-deoxyribonucleoside-DNA + H(+). Functionally, involved in base excision repair of DNA damaged by oxidation or by mutagenic agents. Acts as a DNA glycosylase that recognizes and removes damaged bases. Has a preference for oxidized purines, such as 7,8-dihydro-8-oxoguanine (8-oxoG). Has AP (apurinic/apyrimidinic) lyase activity and introduces nicks in the DNA strand. Cleaves the DNA backbone by beta-delta elimination to generate a single-strand break at the site of the removed base with both 3'- and 5'-phosphates. The protein is Formamidopyrimidine-DNA glycosylase of Variovorax paradoxus (strain S110).